Consider the following 314-residue polypeptide: Putative integrase/recombinase y4rB (314 aa).

Residues serine 2–alanine 79 form the Core-binding (CB) domain. Positions alanine 100–arginine 304 constitute a Tyr recombinase domain. Active-site residues include arginine 147, lysine 172, histidine 248, arginine 251, and histidine 282. The active-site O-(3'-phospho-DNA)-tyrosine intermediate is the tyrosine 291.

Belongs to the 'phage' integrase family.

The chain is Putative integrase/recombinase y4rB from Sinorhizobium fredii (strain NBRC 101917 / NGR234).